Consider the following 408-residue polypeptide: Guanine nucleotide-binding protein alpha-14 subunit (408 aa).

GTP-binding positions include His-39–Lys-46, Gly-79–Ser-86, Thr-201–Asp-205, Val-216–Thr-222, Asp-241–Gln-245, Phe-285–Phe-288, Asn-325–Asp-328, and Ala-380. The G-alpha domain occupies Ser-71–Ser-408. The G1 motif stretch occupies residues Lys-74–Thr-87. Residue Ser-86 coordinates Mg(2+). Positions Asp-214–Thr-222 are G2 motif. Residue Thr-222 participates in Mg(2+) binding. A G3 motif region spans residues Leu-237–Arg-246. A G4 motif region spans residues Leu-321 to Asp-328. The tract at residues Thr-378–Thr-383 is G5 motif.

The protein belongs to the G-alpha family. In terms of assembly, g proteins are composed of 3 units; alpha, beta and gamma. The alpha chain contains the guanine nucleotide binding site. Interacts with the dopamine receptor dop-2 (via C-terminus); the interaction is direct.

Functionally, guanine nucleotide-binding proteins (G proteins) are involved as modulators or transducers in various transmembrane signaling systems. In association with the G-protein coupled dopamine receptor dop-2, modulates two types of learning: touch habituation and chemosensory associative conditioning. The chain is Guanine nucleotide-binding protein alpha-14 subunit from Caenorhabditis elegans.